Consider the following 291-residue polypeptide: Acetyl-coenzyme A carboxylase carboxyl transferase subunit beta (291 aa).

In terms of domain architecture, CoA carboxyltransferase N-terminal spans 29–291 (IMTKCPDCKK…TGGDLEWLEN (263 aa)). Cys33, Cys36, Cys52, and Cys55 together coordinate Zn(2+). The C4-type zinc finger occupies 33–55 (CPDCKKIMLTKELDKNLRVCMNC).

This sequence belongs to the AccD/PCCB family. Acetyl-CoA carboxylase is a heterohexamer composed of biotin carboxyl carrier protein (AccB), biotin carboxylase (AccC) and two subunits each of ACCase subunit alpha (AccA) and ACCase subunit beta (AccD). The cofactor is Zn(2+).

The protein resides in the cytoplasm. The enzyme catalyses N(6)-carboxybiotinyl-L-lysyl-[protein] + acetyl-CoA = N(6)-biotinyl-L-lysyl-[protein] + malonyl-CoA. It participates in lipid metabolism; malonyl-CoA biosynthesis; malonyl-CoA from acetyl-CoA: step 1/1. Functionally, component of the acetyl coenzyme A carboxylase (ACC) complex. Biotin carboxylase (BC) catalyzes the carboxylation of biotin on its carrier protein (BCCP) and then the CO(2) group is transferred by the transcarboxylase to acetyl-CoA to form malonyl-CoA. The polypeptide is Acetyl-coenzyme A carboxylase carboxyl transferase subunit beta (Bacillus licheniformis (strain ATCC 14580 / DSM 13 / JCM 2505 / CCUG 7422 / NBRC 12200 / NCIMB 9375 / NCTC 10341 / NRRL NRS-1264 / Gibson 46)).